Consider the following 508-residue polypeptide: Probable G-protein coupled receptor 101 (508 aa).

At 1-35 (MTSTCTNSTRESNSSHTCMPLSKMPISLAHGIIRS) the chain is on the extracellular side. Asn-7 and Asn-13 each carry an N-linked (GlcNAc...) asparagine glycan. A helical transmembrane segment spans residues 36–56 (TVLVIFLAASFVGNIVLALVL). Over 57–68 (QRKPQLLQVTNR) the chain is Cytoplasmic. The chain crosses the membrane as a helical span at residues 69–89 (FIFNLLVTDLLQISLVAPWVV). Topologically, residues 90–106 (ATSVPLFWPLNSHFCTA) are extracellular. A disulfide bond links Cys-104 and Cys-182. Residues 107–127 (LVSLTHLFAFASVNTIVVVSV) form a helical membrane-spanning segment. Residues 128–149 (DRYLSIIHPLSYPSKMTQRRGY) are Cytoplasmic-facing. A helical membrane pass occupies residues 150–170 (LLLYGTWIVAILQSTPPLYGW). Over 171 to 196 (GQAAFDERNALCSMIWGASPSYTILS) the chain is Extracellular. Residues 197–217 (VVSFIVIPLIVMIACYSVVFC) traverse the membrane as a helical segment. The Cytoplasmic segment spans residues 218-399 (AARRQHALLY…PRCYQCKAAK (182 aa)). Residues 244 to 338 (NEDEEGAEKK…ENSMKADKGR (95 aa)) are disordered. 2 stretches are compositionally biased toward basic and acidic residues: residues 250–288 (AEKKEEFQDESEFRRQHEGEVKAKEGRMEAKDGSLKAKE) and 318–338 (MEGKEGSTKVEENSMKADKGR). The helical transmembrane segment at 400–420 (VIFIIIFSYVLSLGPYCFLAV) threads the bilayer. Residues 421–433 (LAVWVDVETQVPQ) are Extracellular-facing. Residues 434 to 454 (WVITIIIWLFFLQCCIHPYVY) form a helical membrane-spanning segment. Topologically, residues 455–508 (GYMHKTIKKEIQDMLKKFFCKEKPPKEDSHPDLPGTEGGTEGKIVPSYDSATFP) are cytoplasmic. Residues 476–485 (EKPPKEDSHP) show a composition bias toward basic and acidic residues. The segment at 476–508 (EKPPKEDSHPDLPGTEGGTEGKIVPSYDSATFP) is disordered.

It belongs to the G-protein coupled receptor 1 family.

The protein localises to the cell membrane. Functionally, orphan receptor. The protein is Probable G-protein coupled receptor 101 (GPR101) of Homo sapiens (Human).